A 258-amino-acid chain; its full sequence is MNKLDLNLKEVHNELVEFLRENFKKAGFSKAVLGLSGGIDSALVAYLLRDALGKENVLAIMMPYKSSNPDSLNHAKLVVEDLKINSKTIEITDMIDAYFKNEKEATSLRMGNKMARERMSILFDYSSKENALVVGTSNKTEIYLGYSTQFGDAACALNPIGDLYKTNIWDLSRYLKIPNELIEKKPSADLWEGQTDEQEMGLTYKEADQVMYRLLEENKTVEEVLAEGFNKDLVDNIVRRMNRSEYKRRMPLIAKIKR.

34-41 (GLSGGIDS) contributes to the ATP binding site. Asp-40 lines the Mg(2+) pocket. Arg-116 lines the deamido-NAD(+) pocket. Thr-136 is a binding site for ATP. Glu-141 is a Mg(2+) binding site. The ATP site is built by Lys-165 and Ser-187.

The protein belongs to the NAD synthetase family. In terms of assembly, homodimer.

The enzyme catalyses deamido-NAD(+) + NH4(+) + ATP = AMP + diphosphate + NAD(+) + H(+). Its pathway is cofactor biosynthesis; NAD(+) biosynthesis; NAD(+) from deamido-NAD(+) (ammonia route): step 1/1. Functionally, catalyzes the ATP-dependent amidation of deamido-NAD to form NAD. Uses ammonia as a nitrogen source. In Fusobacterium nucleatum subsp. nucleatum (strain ATCC 25586 / DSM 15643 / BCRC 10681 / CIP 101130 / JCM 8532 / KCTC 2640 / LMG 13131 / VPI 4355), this protein is NH(3)-dependent NAD(+) synthetase.